The chain runs to 185 residues: Ribosome-recycling factor (185 aa).

The protein belongs to the RRF family.

The protein localises to the cytoplasm. Responsible for the release of ribosomes from messenger RNA at the termination of protein biosynthesis. May increase the efficiency of translation by recycling ribosomes from one round of translation to another. This Shewanella loihica (strain ATCC BAA-1088 / PV-4) protein is Ribosome-recycling factor.